A 270-amino-acid chain; its full sequence is Dehydrodolichyl diphosphate synthase (270 aa).

It belongs to the UPP synthase family.

It is found in the endoplasmic reticulum membrane. It participates in protein modification; protein glycosylation. Functionally, cis-prenyl transferase that adds multiple copies of isopentenyl pyrophosphate (IPP) to farnesyl pyrophosphate (FPP) to produce dehydrodolichyl diphosphate (Dedol-PP). The chain is Dehydrodolichyl diphosphate synthase (RER2) from Encephalitozoon cuniculi (strain GB-M1) (Microsporidian parasite).